A 569-amino-acid polypeptide reads, in one-letter code: Urease subunit alpha (569 aa).

The Urease domain maps to 131 to 569 (GGFDSHIHFI…LPMAQRYFLF (439 aa)). Ni(2+)-binding residues include H136, H138, and K219. K219 is subject to N6-carboxylysine. Residue H221 coordinates substrate. The Ni(2+) site is built by H248 and H274. H322 functions as the Proton donor in the catalytic mechanism. D362 is a binding site for Ni(2+).

Belongs to the metallo-dependent hydrolases superfamily. Urease alpha subunit family. In terms of assembly, heterotrimer of UreA (gamma), UreB (beta) and UreC (alpha) subunits. Three heterotrimers associate to form the active enzyme. Ni cation is required as a cofactor. Carboxylation allows a single lysine to coordinate two nickel ions.

The protein localises to the cytoplasm. It catalyses the reaction urea + 2 H2O + H(+) = hydrogencarbonate + 2 NH4(+). Its pathway is nitrogen metabolism; urea degradation; CO(2) and NH(3) from urea (urease route): step 1/1. The chain is Urease subunit alpha from Ruegeria pomeroyi (strain ATCC 700808 / DSM 15171 / DSS-3) (Silicibacter pomeroyi).